We begin with the raw amino-acid sequence, 157 residues long: Small ribosomal subunit protein uS7 (157 aa).

Belongs to the universal ribosomal protein uS7 family. As to quaternary structure, part of the 30S ribosomal subunit. Contacts proteins S9 and S11.

Functionally, one of the primary rRNA binding proteins, it binds directly to 16S rRNA where it nucleates assembly of the head domain of the 30S subunit. Is located at the subunit interface close to the decoding center, probably blocks exit of the E-site tRNA. In Leptospira biflexa serovar Patoc (strain Patoc 1 / Ames), this protein is Small ribosomal subunit protein uS7.